The following is an 832-amino-acid chain: Histone acetyltransferase KAT2B (832 aa).

Gly residues predominate over residues 1–22; it reads MSEAGGAGPGGCGAGAGAGAGP. Disordered regions lie at residues 1–54 and 395–436; these read MSEA…ACGP and SYNS…DSHV. Residues 24 to 39 are compositionally biased toward pro residues; the sequence is ALPPQPAALPPAPPQG. The segment covering 40–54 has biased composition (low complexity); the sequence is SPCAAAAGGSGACGP. The segment covering 395 to 413 has biased composition (polar residues); that stretch reads SYNSTSSSLEQPNAGSSSP. Positions 425–436 are enriched in basic and acidic residues; it reads PGEKRKMTDSHV. The 149-residue stretch at 503–651 folds into the N-acetyltransferase domain; that stretch reads LNQKPNKKIL…GATLMGCELN (149 aa). Glutamate 570 serves as the catalytic Proton donor/acceptor. Acetyl-CoA-binding positions include 574–576, 581–587, and 612–615; these read CAV, QVKGYGT, and YAIG. Residues 706–725 form a disordered region; sequence IRETGWKPSGKEKSKEPRDP. The span at 714-725 shows a compositional bias: basic and acidic residues; sequence SGKEKSKEPRDP. The 105-residue stretch at 723–827 folds into the Bromo domain; the sequence is RDPDQLYSTL…KFFFSKIKEA (105 aa).

This sequence belongs to the acetyltransferase family. GCN5 subfamily. As to quaternary structure, interacts with SIRT1. Interacts (unsumoylated form) with NR2C1; the interaction promotes transactivation activity. Interacts with EP300, CREBBP and DDX17. Interacts with NCOA1 and NCOA3. Component of a large chromatin remodeling complex, at least composed of MYSM1, KAT2B/PCAF, RBM10 and KIF11/TRIP5. Interacts with NR2C2 (hypophosphorylated and unsumoylated form); the interaction promotes the transactivation activity of NR2C2. Interacts with KLF1; the interaction does not acetylate KLF1 and there is no enhancement of its transactivational activity. Interacts with NFE4. Interacts with MECOM. Interacts with E2F1; the interaction acetylates E2F1 augmenting its DNA-binding and transcriptional activity. Interacts with NPAS2, BMAL1 and CLOCK. Interacts with BCAS3. Interacts with CEBPB. Interacts with NR4A3. Interacts with NFATC2. Interacts with TBX5. Interacts with PLK4. Interacts with RB1; this interaction leads to RB1 acetylation. Interacts with VRK1. In terms of assembly, (Microbial infection) Interacts with and acetylates HIV-1 Tat. (Microbial infection) Interacts with HTLV-1 Tax. In terms of tissue distribution, ubiquitously expressed but most abundant in heart and skeletal muscle. Also expressed in the skin, in keratinocytes (at protein level).

It is found in the nucleus. Its subcellular location is the cytoplasm. It localises to the cytoskeleton. The protein localises to the microtubule organizing center. The protein resides in the centrosome. It carries out the reaction L-lysyl-[histone] + acetyl-CoA = N(6)-acetyl-L-lysyl-[histone] + CoA + H(+). The catalysed reaction is L-lysyl-[protein] + acetyl-CoA = N(6)-acetyl-L-lysyl-[protein] + CoA + H(+). It catalyses the reaction spermidine + acetyl-CoA = N(8)-acetylspermidine + CoA + H(+). With respect to regulation, activated in vitro by very low concentrations of spermidine, but inhibited at spermidine concentrations higher than 4 uM. The activating effect of low spermidine concentrations may be mediated by N(8)-acetylspermidine produced by KAT2B/P/CAF itself acting as a positive feedback loop. Functionally, functions as a histone acetyltransferase (HAT) to promote transcriptional activation. Has significant histone acetyltransferase activity with core histones (H3 and H4), and also with nucleosome core particles. Has a a strong preference for acetylation of H3 at 'Lys-9' (H3K9ac). Also acetylates non-histone proteins, such as ACLY, MAPRE1/EB1, PLK4, RRP9/U3-55K and TBX5. Inhibits cell-cycle progression and counteracts the mitogenic activity of the adenoviral oncoprotein E1A. Acts as a circadian transcriptional coactivator which enhances the activity of the circadian transcriptional activators: NPAS2-BMAL1 and CLOCK-BMAL1 heterodimers. Involved in heart and limb development by mediating acetylation of TBX5, acetylation regulating nucleocytoplasmic shuttling of TBX5. Acts as a negative regulator of centrosome amplification by mediating acetylation of PLK4. Acetylates RRP9/U3-55K, a core subunit of the U3 snoRNP complex, impairing pre-rRNA processing. Acetylates MAPRE1/EB1, promoting dynamic kinetochore-microtubule interactions in early mitosis. Also acetylates spermidine. Its function is as follows. (Microbial infection) In case of HIV-1 infection, it is recruited by the viral protein Tat. Regulates Tat's transactivating activity and may help inducing chromatin remodeling of proviral genes. The protein is Histone acetyltransferase KAT2B of Homo sapiens (Human).